A 150-amino-acid polypeptide reads, in one-letter code: Large ribosomal subunit protein uL13 (150 aa).

The disordered stretch occupies residues 129–150 (PEHPHSAQRPQTLQLNPAASSQ). Polar residues predominate over residues 136–150 (QRPQTLQLNPAASSQ).

This sequence belongs to the universal ribosomal protein uL13 family. Part of the 50S ribosomal subunit.

This protein is one of the early assembly proteins of the 50S ribosomal subunit, although it is not seen to bind rRNA by itself. It is important during the early stages of 50S assembly. The chain is Large ribosomal subunit protein uL13 from Prochlorococcus marinus (strain MIT 9303).